Reading from the N-terminus, the 226-residue chain is 2-C-methyl-D-erythritol 4-phosphate cytidylyltransferase (226 aa).

It belongs to the IspD/TarI cytidylyltransferase family. IspD subfamily.

The catalysed reaction is 2-C-methyl-D-erythritol 4-phosphate + CTP + H(+) = 4-CDP-2-C-methyl-D-erythritol + diphosphate. It functions in the pathway isoprenoid biosynthesis; isopentenyl diphosphate biosynthesis via DXP pathway; isopentenyl diphosphate from 1-deoxy-D-xylulose 5-phosphate: step 2/6. Its function is as follows. Catalyzes the formation of 4-diphosphocytidyl-2-C-methyl-D-erythritol from CTP and 2-C-methyl-D-erythritol 4-phosphate (MEP). The chain is 2-C-methyl-D-erythritol 4-phosphate cytidylyltransferase from Parasynechococcus marenigrum (strain WH8102).